The chain runs to 246 residues: Proteasome subunit alpha type-5 (246 aa).

It belongs to the peptidase T1A family. As to quaternary structure, the 26S proteasome consists of a 20S proteasome core and two 19S regulatory subunits. The 20S proteasome core is composed of 28 subunits that are arranged in four stacked rings, resulting in a barrel-shaped structure. The two end rings are each formed by seven alpha subunits, and the two central rings are each formed by seven beta subunits. The catalytic chamber with the active sites is on the inside of the barrel.

The protein resides in the cytoplasm. The protein localises to the nucleus. In terms of biological role, the proteasome is a multicatalytic proteinase complex which is characterized by its ability to cleave peptides with Arg, Phe, Tyr, Leu, and Glu adjacent to the leaving group at neutral or slightly basic pH. The proteasome has an ATP-dependent proteolytic activity. The polypeptide is Proteasome subunit alpha type-5 (Trypanosoma brucei brucei).